The chain runs to 380 residues: Probable polyglutamine synthesis accessory protein MT0602 (380 aa).

The protein belongs to the CapA family.

In terms of biological role, could be involved in the biosynthesis, transport or localization of poly-alpha-L-glutamine (PLG), a cell wall component. Contributes to stress tolerance and virulence. The chain is Probable polyglutamine synthesis accessory protein MT0602 from Mycobacterium tuberculosis (strain CDC 1551 / Oshkosh).